The chain runs to 219 residues: Multiple organellar RNA editing factor 2, chloroplastic (219 aa).

A chloroplast-targeting transit peptide spans 1 to 48; it reads MALPLSGTRHLTRALLSNVTLMAPPRIPSSVHYGGSRLGCSTRFFSIR. The segment at 182 to 219 is disordered; sequence VQRSPERQRRVEPQPQRAQDRPRYNDRTRYSRRRENTR. The span at 185-219 shows a compositional bias: basic and acidic residues; the sequence is SPERQRRVEPQPQRAQDRPRYNDRTRYSRRRENTR.

It belongs to the MORF family. In terms of assembly, homodimer and heterodimer with MORF9. Interacts with protoporphyrinogen oxidase 1 PPOX1. Heterodimers with MORF8/RIP1 and MORF9/RIP9. Interacts with PCMP-A2/PMD1. Interacts with ORRM1. Interacts with ORRM6.

The protein localises to the plastid. It localises to the chloroplast. Involved in plastid rRNA processing and consequently in translation and early chloroplast differentiation. Involved in organellar RNA editing. Required for the processing of multiple editing sites in plastids. This Arabidopsis thaliana (Mouse-ear cress) protein is Multiple organellar RNA editing factor 2, chloroplastic.